The following is a 305-amino-acid chain: GTPase Era (305 aa).

Positions 13–181 (RCGYVAIVGR…EKLVAERLPE (169 aa)) constitute an Era-type G domain. Positions 21-28 (GRPNVGKS) are G1. 21-28 (GRPNVGKS) contributes to the GTP binding site. The tract at residues 47–51 (QTTRH) is G2. The segment at 68-71 (DTPG) is G3. GTP-binding positions include 68-72 (DTPGL) and 130-133 (NKTD). The tract at residues 130–133 (NKTD) is G4. The tract at residues 160 to 162 (ISA) is G5. The KH type-2 domain maps to 204–288 (VREKIMRQLG…MLNLWVKVKG (85 aa)).

Belongs to the TRAFAC class TrmE-Era-EngA-EngB-Septin-like GTPase superfamily. Era GTPase family. Monomer.

The protein localises to the cytoplasm. Its subcellular location is the cell inner membrane. Its function is as follows. An essential GTPase that binds both GDP and GTP, with rapid nucleotide exchange. Plays a role in 16S rRNA processing and 30S ribosomal subunit biogenesis and possibly also in cell cycle regulation and energy metabolism. This Pseudomonas aeruginosa (strain LESB58) protein is GTPase Era.